Reading from the N-terminus, the 297-residue chain is Thiosulfate sulfurtransferase (297 aa).

N6-acetyllysine; alternate is present on Lys14. Lys14 bears the N6-succinyllysine; alternate mark. The region spanning 25-143 (VGPGLRVLDA…WLKEGHPVTS (119 aa)) is the Rhodanese 1 domain. Ser35 carries an O-linked (GlcNAc) serine glycan. Residue Ser38 is modified to Phosphoserine. Residue Lys136 is modified to N6-acetyllysine; alternate. Lys136 carries the post-translational modification N6-succinyllysine; alternate. Residues 144-159 (EPSRPEPAIFKATLNR) are hinge. Lys163 is modified (N6-acetyllysine). In terms of domain architecture, Rhodanese 2 spans 173 to 288 (ESKRFQLVDS…WFHRAPPETW (116 aa)). Lys175 bears the N6-acetyllysine; alternate mark. N6-succinyllysine; alternate is present on Lys175. Arg187 is a binding site for substrate. Residue Lys224 is modified to N6-acetyllysine; alternate. Lys224 carries the N6-succinyllysine; alternate modification. At Lys236 the chain carries N6-acetyllysine. Residue Lys237 is modified to N6-acetyllysine; alternate. Lys237 is subject to N6-succinyllysine; alternate. Cys248 (cysteine persulfide intermediate) is an active-site residue. Lys250 contacts substrate.

As to quaternary structure, monomer. In terms of tissue distribution, expressed in numerous tissues.

The protein localises to the mitochondrion matrix. The enzyme catalyses thiosulfate + hydrogen cyanide = thiocyanate + sulfite + 2 H(+). In terms of biological role, together with MRPL18, acts as a mitochondrial import factor for the cytosolic 5S rRNA. Only the nascent unfolded cytoplasmic form is able to bind to the 5S rRNA. Formation of iron-sulfur complexes and cyanide detoxification. Binds molecular oxygen and sulfur. The polypeptide is Thiosulfate sulfurtransferase (TST) (Bos taurus (Bovine)).